The primary structure comprises 449 residues: MNPNQKIITIGSVSLTIATVCFLMQIAILATNVTLHFRQNERSIPAYNQTTPCKPIIIERNIKYRNWSKPQCQITGFAPFSKDNSIRLSAGGGIWVTREPYVSCDPSKCYQFALGQGTTLDNNHSNGTIHDRTPHRTLLMNELGVPFHLGTRQVCIAWSSSSCHDGKAWLHVCVTGDDRNATASFIYNGMLVDSIGSWSQNILRTQESECVCINGTCTVVMTDGSASGKADIRILFIREGKIVHISPLSGSAQHIEECSCYPRYPNVRCVCRDNWKGSNRPVIDINMADYSIDSSYVCSGLVGDTPRNDDSSSSSNCRDPNNERGNPGVKGWAFDIGDDVWMGRTISKDSRSGYETFRVIGGWATANSKSQTNRQVIVDNNNWSGYSGIFSVESKSCINRCFYVELIRGRPQETRVWWTSNSIVVFCGTSGTYGTGSWPDGANINFMPL.

Residues 1 to 6 lie on the Intravirion side of the membrane; the sequence is MNPNQK. Residues 7 to 29 traverse the membrane as a helical segment; that stretch reads IITIGSVSLTIATVCFLMQIAIL. The involved in apical transport and lipid raft association stretch occupies residues 11-33; it reads GSVSLTIATVCFLMQIAILATNV. The Virion surface segment spans residues 30-449; the sequence is ATNVTLHFRQ…DGANINFMPL (420 aa). 3 N-linked (GlcNAc...) asparagine; by host glycosylation sites follow: Asn32, Asn48, and Asn66. The interval 36 to 68 is hypervariable stalk region; the sequence is HFRQNERSIPAYNQTTPCKPIIIERNIKYRNWS. The tract at residues 71-449 is head of neuraminidase; that stretch reads QCQITGFAPF…DGANINFMPL (379 aa). 8 cysteine pairs are disulfide-bonded: Cys72–Cys397, Cys104–Cys109, Cys163–Cys210, Cys212–Cys217, Cys258–Cys271, Cys260–Cys269, Cys298–Cys317, and Cys401–Cys427. A substrate-binding site is contributed by Arg98. Asn123 and Asn126 each carry an N-linked (GlcNAc...) asparagine; by host glycan. Asp131 acts as the Proton donor/acceptor in catalysis. Arg132 contacts substrate. N-linked (GlcNAc...) asparagine; by host glycosylation is found at Asn180 and Asn214. Substrate is bound at residue 256–257; that stretch reads EE. Residue Arg272 participates in substrate binding. Ca(2+)-binding residues include Asp273, Gly277, and Asp304. Residues 305–330 form a disordered region; that stretch reads TPRNDDSSSSSNCRDPNNERGNPGVK. Substrate is bound at residue Arg351. An N-linked (GlcNAc...) asparagine; by host glycan is attached at Asn382. The active-site Nucleophile is the Tyr386.

This sequence belongs to the glycosyl hydrolase 34 family. Homotetramer. Ca(2+) serves as cofactor. N-glycosylated.

Its subcellular location is the virion membrane. It localises to the host apical cell membrane. It catalyses the reaction Hydrolysis of alpha-(2-&gt;3)-, alpha-(2-&gt;6)-, alpha-(2-&gt;8)- glycosidic linkages of terminal sialic acid residues in oligosaccharides, glycoproteins, glycolipids, colominic acid and synthetic substrates.. Its activity is regulated as follows. Inhibited by the neuraminidase inhibitors zanamivir (Relenza) and oseltamivir (Tamiflu). These drugs interfere with the release of progeny virus from infected cells and are effective against all influenza strains. Resistance to neuraminidase inhibitors is quite rare. Catalyzes the removal of terminal sialic acid residues from viral and cellular glycoconjugates. Cleaves off the terminal sialic acids on the glycosylated HA during virus budding to facilitate virus release. Additionally helps virus spread through the circulation by further removing sialic acids from the cell surface. These cleavages prevent self-aggregation and ensure the efficient spread of the progeny virus from cell to cell. Otherwise, infection would be limited to one round of replication. Described as a receptor-destroying enzyme because it cleaves a terminal sialic acid from the cellular receptors. May facilitate viral invasion of the upper airways by cleaving the sialic acid moieties on the mucin of the airway epithelial cells. Likely to plays a role in the budding process through its association with lipid rafts during intracellular transport. May additionally display a raft-association independent effect on budding. Plays a role in the determination of host range restriction on replication and virulence. Sialidase activity in late endosome/lysosome traffic seems to enhance virus replication. This is Neuraminidase from Aves.